Reading from the N-terminus, the 287-residue chain is 2-dehydro-3-deoxyphosphooctonate aldolase (287 aa).

Belongs to the KdsA family.

It localises to the cytoplasm. The enzyme catalyses D-arabinose 5-phosphate + phosphoenolpyruvate + H2O = 3-deoxy-alpha-D-manno-2-octulosonate-8-phosphate + phosphate. It participates in carbohydrate biosynthesis; 3-deoxy-D-manno-octulosonate biosynthesis; 3-deoxy-D-manno-octulosonate from D-ribulose 5-phosphate: step 2/3. Its pathway is bacterial outer membrane biogenesis; lipopolysaccharide biosynthesis. The polypeptide is 2-dehydro-3-deoxyphosphooctonate aldolase (Caulobacter vibrioides (strain ATCC 19089 / CIP 103742 / CB 15) (Caulobacter crescentus)).